The following is a 1038-amino-acid chain: Subtilisin-like protease SBT6.1 (1038 aa).

Residues 1 to 30 form the signal peptide; the sequence is MKVLGEASSYPYRSCIIVVFLSVSLFWLRP. The propeptide at 31 to 181 is removed in mature form; sequence STYHPQQQNL…TTLNWSRHLL (151 aa). N-linked (GlcNAc...) asparagine glycans are attached at residues Asn44, Asn52, Asn171, and Asn175. Residues 175–473 form the Peptidase S8 domain; it reads NWSRHLLAQK…VDLLESYEIL (299 aa). The Lumenal segment spans residues 182–1000; the sequence is AQKTQVTSMF…IDMPFLVPTR (819 aa). Asp212 serves as the catalytic Charge relay system. Asn230 is a glycosylation site (N-linked (GlcNAc...) asparagine). The Charge relay system role is filled by His243. N-linked (GlcNAc...) asparagine glycosylation occurs at Asn300. Catalysis depends on Ser409, which acts as the Charge relay system. Asn513, Asn579, Asn902, and Asn954 each carry an N-linked (GlcNAc...) asparagine glycan. A helical membrane pass occupies residues 1001-1021; it reads WIVLAGVVASGVLVLLSIWRI. At 1022–1038 the chain is on the cytoplasmic side; that stretch reads RQKRGRRRRASGSNRLA.

This sequence belongs to the peptidase S8 family. In terms of assembly, interacts with PME1 and PME5. Expressed in the vasculature of roots, cotyledons and leaves.

Its subcellular location is the golgi apparatus membrane. Its function is as follows. Serine protease that catalyzes the first step (site-1 cleavage) in the proteolytic activation of various factors, prior to site-2 cleavage. Part of a regulated intramembrane proteolysis (RIP) cascade. Cleaves BZIP17 and BZIP28 after the Arg-Arg-Ile-Leu (RRIL) motif. May cleave BZIP49 after the RRIL motif. Targets the membrane-associated BZIP17 factor, which functions as a stress sensor and transducer in a signaling pathway that resembles an ER stress response. Following salt stress, BZIP17 is cleaved by SBT6.1 (S1P) and S2P at the C-terminus and the N-terminal bZIP component is translocated to the nucleus, where it activates the expression of salt stress response genes. Cleaves the pectinesterases PME1 after the Arg-Arg-Leu-Met (RRLM) and Arg-Arg-Leu-Leu (RRLL) motifs, and PME5 after the Arg-Arg-Leu-Leu (RRLL) and Arg-Lys-Leu-Met (RKLM) motifs. This processing and C-terminus release occurs in the Golgi apparatus and is required for cell wall targeting of pectinesterases. Thus, SBT6.1 mediates the regulated release of mature pectinesterases from the Golgi. Cleaves the peptide growth factor RALF23 after the Arg-Arg-Ile-Leu (RRIL) motif. This processing is required for RALF23 function in the negative regulation of brassinolide (BL)-mediated signaling pathway (e.g. BL-induced hypocotyl elongation and branching limitation). The polypeptide is Subtilisin-like protease SBT6.1 (Arabidopsis thaliana (Mouse-ear cress)).